Reading from the N-terminus, the 91-residue chain is Small ribosomal subunit protein uS15 (91 aa).

The protein belongs to the universal ribosomal protein uS15 family. As to quaternary structure, part of the 30S ribosomal subunit. Forms a bridge to the 50S subunit in the 70S ribosome, contacting the 23S rRNA.

In terms of biological role, one of the primary rRNA binding proteins, it binds directly to 16S rRNA where it helps nucleate assembly of the platform of the 30S subunit by binding and bridging several RNA helices of the 16S rRNA. Functionally, forms an intersubunit bridge (bridge B4) with the 23S rRNA of the 50S subunit in the ribosome. In Deinococcus geothermalis (strain DSM 11300 / CIP 105573 / AG-3a), this protein is Small ribosomal subunit protein uS15.